The chain runs to 430 residues: Acylsugar acyltransferase 3 (430 aa).

Residues His155 and Asp367 each act as proton acceptor in the active site.

It belongs to the plant acyltransferase family. Monomer. In terms of tissue distribution, expressed in tip cells of type I trichomes of stems and petioles, sites of acylsugars production.

Its function is as follows. Catalyzes the transfer of short (four to five carbons) branched acyl chains to the furanose ring of di-acylsucrose acceptors to produce tri-acylsucroses such as S3:15 (5,5,5), S4:17 (2,5,5,5) and S4:24 (2,5,5,12) acylsucroses. In Solanum lycopersicum (Tomato), this protein is Acylsugar acyltransferase 3.